A 156-amino-acid polypeptide reads, in one-letter code: Ribosome maturation factor RimP (156 aa).

It belongs to the RimP family.

It localises to the cytoplasm. Functionally, required for maturation of 30S ribosomal subunits. This chain is Ribosome maturation factor RimP, found in Prochlorococcus marinus (strain NATL1A).